Consider the following 284-residue polypeptide: Capsid assembly scaffolding protein (284 aa).

Catalysis depends on residues Asp-19, His-48, and Ser-107. A coiled-coil region spans residues 206 to 243 (EAVTAVAEHVQEKLSATEQRLAEMETAFSALKQEVTDR). The tract at residues 258–284 (LDHTESLTQQRRSKATGGGGDALMTNC) is disordered.

The protein belongs to the P2likevirus scaffolding protein family. As to quaternary structure, homomultimer. Autocleaves itself into an N-terminal fragment containing the protease activity, that remains in the capsid following maturation.

Its function is as follows. Scaffolding protein and protease involved in the icosahedric procapsid assembly. Coassembles with the capsid proteins to form the procapsid, in which the scaffolding protein is found within the external shell of icosahedrally arranged capsid protein subunits. In a subsequent step the scaffolding protein molecules are cleaved by the viral protease activity. This is Capsid assembly scaffolding protein (O) from Enterobacteriaceae (Bacteriophage P2).